The primary structure comprises 439 residues: Xylose isomerase (439 aa).

Catalysis depends on residues H101 and D104. Mg(2+) contacts are provided by E232, E268, H271, D296, D307, D309, and D339.

Belongs to the xylose isomerase family. In terms of assembly, homotetramer. Mg(2+) serves as cofactor.

It localises to the cytoplasm. It catalyses the reaction alpha-D-xylose = alpha-D-xylulofuranose. The sequence is that of Xylose isomerase from Serratia proteamaculans (strain 568).